The chain runs to 246 residues: Probable septum site-determining protein MinC (246 aa).

It belongs to the MinC family. As to quaternary structure, interacts with MinD and FtsZ.

Its function is as follows. Cell division inhibitor that blocks the formation of polar Z ring septums. Rapidly oscillates between the poles of the cell to destabilize FtsZ filaments that have formed before they mature into polar Z rings. Prevents FtsZ polymerization. The sequence is that of Probable septum site-determining protein MinC from Pseudomonas syringae pv. syringae (strain B728a).